The chain runs to 1196 residues: MDEEMRHSLECIQANQIFPRKQLIREDENLQVPFLELHGESTEYVGRAEEAIIALSNYRLHIKFKESLVNVPLQLIESVECRDIFQLHLTCKDCKVIRCQFPTFEQCQDWLKRLNNAIRPPGKIEDLFSFAYHAWCMEVYASEKEQHGDLCRPGEHVTSRFKNEVERMGFDMNNAWRISNINEKYKLCGSYPQELIVPAWITDKELESVAGFRSWKRIPAVIYRHQSNGAVIARCGQPEVSWWGWRNADDEHLVQSVARACASDSQSSISKVSTRNSCRDFPNAGDLSDVEFDSSLSNTSGAESLALQPQKLLILDARSYAAAVANRAKGGGCECPEYYPNCEVVFMGMANIHSIRRSFQSLRLLCTQMPDPGNWLSALESTKWLHHLSVLLKSALLVVHAVDRDQRPVLVHCSDGWDRTPQIVALAKLLLDPYYRTIEGFQVLVEMEWLDFGHKFADRCGHGEDSDDLNERCPVFLQWLDCVHQLQRQFPCSFEFNEAFLVKLVQHTYSCLFGTFLCNNAKERGEKQTQERTCSVWSLLRAGNKAFKNLLYSSQSEAVLYPVCHVRNLMLWSAVYLPCPSPSTPTDDSCAPYPVPGTSPDEPPLSRLPKTRSFDNLTTTCENMVPLASRRSSDPSLNEKWQEHGRSLELSSFASAGEEVPAMDSLRKPSRLLGGAELSVAAGVAEGQMENILQEATKEESGVEEPTHRGHTEVPEVKEEAPLAKESSMAAEGPVVLYQEPQLDDATLRSHQGPSLSLFSQGIPEHQDGHNVLSSSLQAPLRGEDSQEVPVEQPQVENIAEDRENVAPAVPVDAKVGLGISQSSSLLPSQVPFETRGPHINNSVHMLLEDKVKSESGPQLHHRPCPASSGRFSGKDMLPVAPEPRSAERPQWDSVLHRTSSPGNTLSLLQAPCALPLDKCRQGIVCNGALETENKASEQPAGFDTLQKYPTPNGHCANWEAGRSKDSLSHQLSATSCSSAHLYSRNLHHKWLNSHSGRPSTTSSPDQPSRSHLDDDGMPVYTDTIQQRLRQIESGHQQEVETLKKQVQELKSRLESQYLTSSLRFNGDFGDEVTSIPDSESNLDQNCVSRCSTEIFSEASWEQVDKQDTEMTRWLPDHLAAHCYACDSAFWLASRKHHCRNCGNVFCSSCCNQKVPVPSQQLFEPSRVCKSCYSSLHPTSSSIDLELDKPIAATSN.

S8 bears the Phosphoserine mark. The Myotubularin phosphatase domain occupies 155–576 (EHVTSRFKNE…RNLMLWSAVY (422 aa)). Residues N326, N351, and I352 each coordinate a 1,2-diacyl-sn-glycero-3-phospho-(1D-myo-inositol-3,5-bisphosphate). A 1,2-diacyl-sn-glycero-3-phospho-(1D-myo-inositol-3-phosphate)-binding residues include N326, N351, and I352. Catalysis depends on C413, which acts as the Phosphocysteine intermediate. A 1,2-diacyl-sn-glycero-3-phospho-(1D-myo-inositol-3,5-bisphosphate)-binding residues include S414, D415, G416, W417, D418, R419, K455, and R459. Positions 414, 415, 416, 417, 418, and 419 each coordinate a 1,2-diacyl-sn-glycero-3-phospho-(1D-myo-inositol-3-phosphate). R459 provides a ligand contact to a 1,2-diacyl-sn-glycero-3-phospho-(1D-myo-inositol-3-phosphate). Residues 587–612 (DDSCAPYPVPGTSPDEPPLSRLPKTR) are disordered. The span at 593-603 (YPVPGTSPDEP) shows a compositional bias: pro residues. Residues S613, S633, S647, and S651 each carry the phosphoserine modification. Disordered regions lie at residues 697–719 (TKEE…EVKE) and 855–900 (ESGP…HRTS). S907 carries the phosphoserine modification. Over residues 993–1008 (NSHSGRPSTTSSPDQP) the composition is skewed to polar residues. The interval 993 to 1019 (NSHSGRPSTTSSPDQPSRSHLDDDGMP) is disordered. The stretch at 1027 to 1060 (QRLRQIESGHQQEVETLKKQVQELKSRLESQYLT) forms a coiled coil. A Phosphoserine modification is found at S1062. The FYVE-type zinc finger occupies 1117–1177 (DHLAAHCYAC…VCKSCYSSLH (61 aa)). 8 residues coordinate Zn(2+): C1123, C1126, C1139, C1142, C1147, C1150, C1169, and C1172.

This sequence belongs to the protein-tyrosine phosphatase family. Non-receptor class myotubularin subfamily. In terms of assembly, forms heterodimers with MTMR4 that recruit both CEP55 and PLK1; occurs during early mitosis, regulates the phosphorylation of CEP55 by PLK1 and its recruitment to the midbody where it mediates cell abscission.

The protein localises to the cytoplasm. It is found in the cytosol. It localises to the membrane. It carries out the reaction a 1,2-diacyl-sn-glycero-3-phospho-(1D-myo-inositol-3,5-bisphosphate) + H2O = a 1,2-diacyl-sn-glycero-3-phospho-(1D-myo-inositol-5-phosphate) + phosphate. The enzyme catalyses a 1,2-diacyl-sn-glycero-3-phospho-(1D-myo-inositol-3-phosphate) + H2O = a 1,2-diacyl-sn-glycero-3-phospho-(1D-myo-inositol) + phosphate. It catalyses the reaction 1,2-dihexadecanoyl-sn-glycero-3-phospho-(1D-myo-inositol-3-phosphate) + H2O = 1,2-dihexadecanoyl-sn-glycero-3-phospho-(1D-myo-inositol) + phosphate. The catalysed reaction is 1,2-dioctanoyl-sn-glycero-3-phospho-(1-D-myo-inositol-3-phosphate) + H2O = 1,2-dioctanoyl-sn-glycero-3-phospho-(1D-myo-inositol) + phosphate. It carries out the reaction 1,2-dihexadecanoyl-sn-glycero-3-phospho-(1D-myo-inositol-3,5-phosphate) + H2O = 1,2-dihexadecanoyl-sn-glycero-3-phospho-(1D-myo-inositol-5-phosphate) + phosphate. Its function is as follows. Lipid phosphatase that specifically dephosphorylates the D-3 position of phosphatidylinositol 3-phosphate and phosphatidylinositol 3,5-bisphosphate, generating phosphatidylinositol and phosphatidylinositol 5-phosphate. Decreases the levels of phosphatidylinositol 3-phosphate, a phospholipid found in cell membranes where it acts as key regulator of both cell signaling and intracellular membrane traffic. Could also have a molecular sequestering/adapter activity and regulate biological processes independently of its phosphatase activity. It includes the regulation of midbody abscission during mitotic cytokinesis. The polypeptide is Phosphatidylinositol-3,5-bisphosphate 3-phosphatase MTMR3 (Mus musculus (Mouse)).